A 44-amino-acid chain; its full sequence is Large ribosomal subunit protein bL36 (44 aa).

It belongs to the bacterial ribosomal protein bL36 family.

This chain is Large ribosomal subunit protein bL36, found in Pseudoalteromonas translucida (strain TAC 125).